We begin with the raw amino-acid sequence, 152 residues long: Nucleoside diphosphate kinase B (152 aa).

Residues 1 to 66 are interaction with AKAP13; sequence MAHQERTFIA…DRPFYPGLVK (66 aa). ATP is bound by residues K12, F60, R88, T94, R105, and N115. H118 serves as the catalytic Pros-phosphohistidine intermediate.

This sequence belongs to the NDK family. As to quaternary structure, hexamer of two different chains: An and B (A6, A5B, A4B2, A3B3, A2B4, AB5, B6). Interacts with CAPN8. Interacts with AKAP13. Interacts with ITGB1BP1 (via C-terminal domain region). Interacts with BCL2L10. Mg(2+) is required as a cofactor. In terms of tissue distribution, ubiquitous.

It is found in the cytoplasm. The protein localises to the cell projection. Its subcellular location is the lamellipodium. It localises to the ruffle. The protein resides in the nucleus. It carries out the reaction a 2'-deoxyribonucleoside 5'-diphosphate + ATP = a 2'-deoxyribonucleoside 5'-triphosphate + ADP. The enzyme catalyses a ribonucleoside 5'-diphosphate + ATP = a ribonucleoside 5'-triphosphate + ADP. It catalyses the reaction ATP + protein L-histidine = ADP + protein N-phospho-L-histidine.. In terms of biological role, major role in the synthesis of nucleoside triphosphates other than ATP. The ATP gamma phosphate is transferred to the NDP beta phosphate via a ping-pong mechanism, using a phosphorylated active-site intermediate. Negatively regulates Rho activity by interacting with AKAP13/LBC. Acts as a transcriptional activator of the MYC gene; binds DNA non-specifically. Binds to both single-stranded guanine- and cytosine-rich strands within the nuclease hypersensitive element (NHE) III(1) region of the MYC gene promoter. Does not bind to duplex NHE III(1). Has G-quadruplex (G4) DNA-binding activity, which is independent of its nucleotide-binding and kinase activity. Binds both folded and unfolded G4 with similar low nanomolar affinities. Stabilizes folded G4s regardless of whether they are prefolded or not. Exhibits histidine protein kinase activity. The sequence is that of Nucleoside diphosphate kinase B (NME2) from Canis lupus familiaris (Dog).